A 451-amino-acid chain; its full sequence is Phosphoglucosamine mutase (451 aa).

Catalysis depends on serine 101, which acts as the Phosphoserine intermediate. 4 residues coordinate Mg(2+): serine 101, aspartate 240, aspartate 242, and aspartate 244. Position 101 is a phosphoserine (serine 101).

Belongs to the phosphohexose mutase family. Requires Mg(2+) as cofactor. Activated by phosphorylation.

The enzyme catalyses alpha-D-glucosamine 1-phosphate = D-glucosamine 6-phosphate. Catalyzes the conversion of glucosamine-6-phosphate to glucosamine-1-phosphate. In Nitrosococcus oceani (strain ATCC 19707 / BCRC 17464 / JCM 30415 / NCIMB 11848 / C-107), this protein is Phosphoglucosamine mutase.